Consider the following 243-residue polypeptide: Triosephosphate isomerase (243 aa).

Position 9-11 (9-11 (NWK)) interacts with substrate. The active-site Electrophile is the H98. Residue E167 is the Proton acceptor of the active site. Residues G173, S205, and 226 to 227 (GG) contribute to the substrate site.

The protein belongs to the triosephosphate isomerase family. Homodimer.

It localises to the cytoplasm. The enzyme catalyses D-glyceraldehyde 3-phosphate = dihydroxyacetone phosphate. The protein operates within carbohydrate biosynthesis; gluconeogenesis. It functions in the pathway carbohydrate degradation; glycolysis; D-glyceraldehyde 3-phosphate from glycerone phosphate: step 1/1. Involved in the gluconeogenesis. Catalyzes stereospecifically the conversion of dihydroxyacetone phosphate (DHAP) to D-glyceraldehyde-3-phosphate (G3P). The polypeptide is Triosephosphate isomerase (Mesomycoplasma hyorhinis (Mycoplasma hyorhinis)).